A 172-amino-acid chain; its full sequence is Ribosome maturation factor RimM (172 aa).

Residues Glu96–Leu168 form the PRC barrel domain.

The protein belongs to the RimM family. As to quaternary structure, binds ribosomal protein uS19.

The protein localises to the cytoplasm. Functionally, an accessory protein needed during the final step in the assembly of 30S ribosomal subunit, possibly for assembly of the head region. Essential for efficient processing of 16S rRNA. May be needed both before and after RbfA during the maturation of 16S rRNA. It has affinity for free ribosomal 30S subunits but not for 70S ribosomes. This is Ribosome maturation factor RimM from Streptococcus gordonii (strain Challis / ATCC 35105 / BCRC 15272 / CH1 / DL1 / V288).